The chain runs to 727 residues: Malate synthase G (727 aa).

Acetyl-CoA is bound by residues Val-117, 124 to 125, Ser-275, and Arg-312; that span reads RY. The Proton acceptor role is filled by Arg-339. Glyoxylate-binding positions include Arg-339, Glu-431, and 456 to 459; that span reads GFLD. Mg(2+) contacts are provided by Glu-431 and Asp-459. Pro-540 is a binding site for acetyl-CoA. Cys-616 bears the Cysteine sulfenic acid (-SOH) mark. The active-site Proton donor is Asp-630.

Belongs to the malate synthase family. GlcB subfamily. Monomer. It depends on Mg(2+) as a cofactor.

The protein resides in the cytoplasm. It catalyses the reaction glyoxylate + acetyl-CoA + H2O = (S)-malate + CoA + H(+). Its pathway is carbohydrate metabolism; glyoxylate cycle; (S)-malate from isocitrate: step 2/2. Its function is as follows. Involved in the glycolate utilization. Catalyzes the condensation and subsequent hydrolysis of acetyl-coenzyme A (acetyl-CoA) and glyoxylate to form malate and CoA. The sequence is that of Malate synthase G from Halalkalibacterium halodurans (strain ATCC BAA-125 / DSM 18197 / FERM 7344 / JCM 9153 / C-125) (Bacillus halodurans).